A 118-amino-acid polypeptide reads, in one-letter code: Large ribosomal subunit protein uL24 (118 aa).

It belongs to the universal ribosomal protein uL24 family. Part of the 50S ribosomal subunit.

One of two assembly initiator proteins, it binds directly to the 5'-end of the 23S rRNA, where it nucleates assembly of the 50S subunit. Functionally, one of the proteins that surrounds the polypeptide exit tunnel on the outside of the subunit. The sequence is that of Large ribosomal subunit protein uL24 from Prochlorococcus marinus subsp. pastoris (strain CCMP1986 / NIES-2087 / MED4).